Consider the following 401-residue polypeptide: Enoyl-[acyl-carrier-protein] reductase [NADH] (401 aa).

Residues 48 to 53, 74 to 75, 111 to 112, and 140 to 141 each bind NAD(+); these read GASSGY, FE, DA, and LA. Substrate is bound at residue Tyr226. The active-site Proton donor is Tyr236. Residues Lys245 and 274–276 each bind NAD(+); that span reads VVT.

It belongs to the TER reductase family. In terms of assembly, monomer.

The catalysed reaction is a 2,3-saturated acyl-[ACP] + NAD(+) = a (2E)-enoyl-[ACP] + NADH + H(+). It functions in the pathway lipid metabolism; fatty acid biosynthesis. Functionally, involved in the final reduction of the elongation cycle of fatty acid synthesis (FAS II). Catalyzes the reduction of a carbon-carbon double bond in an enoyl moiety that is covalently linked to an acyl carrier protein (ACP). In Xylella fastidiosa (strain Temecula1 / ATCC 700964), this protein is Enoyl-[acyl-carrier-protein] reductase [NADH].